A 409-amino-acid chain; its full sequence is Regulator of Ty1 transposition protein 103 (409 aa).

The CID domain maps to 1-135 (MPFSSEQFTT…DIERSLKTES (135 aa)). Residues 250 to 409 (LNKNVDEDNI…IQDLLSKLAN (160 aa)) are disordered. A compositionally biased stretch (acidic residues) spans 266-289 (GDGDDDDDDGDNDDDDDDDDDDKN). Composition is skewed to basic and acidic residues over residues 307-323 (TDKK…EHKN), 337-363 (RTHD…KTSE), and 370-380 (EDGHYELDIEG).

It belongs to the UPF0400 (RTT103) family. Interacts with PCF11, RAI1, RAT1, RPO21 and RBP2.

It is found in the nucleus. Its function is as follows. Involved in transcription termination by RNA polymerase II and in regulation of Ty1 transposition. In Saccharomyces cerevisiae (strain ATCC 204508 / S288c) (Baker's yeast), this protein is Regulator of Ty1 transposition protein 103 (RTT103).